The primary structure comprises 209 residues: Guanylate kinase (209 aa).

In terms of domain architecture, Guanylate kinase-like spans 10 to 189 (GLLLVLSAPS…AFSDLRSVVV (180 aa)). Residue 17 to 24 (APSGAGKT) coordinates ATP.

Belongs to the guanylate kinase family.

The protein resides in the cytoplasm. The catalysed reaction is GMP + ATP = GDP + ADP. In terms of biological role, essential for recycling GMP and indirectly, cGMP. This Myxococcus xanthus (strain DK1622) protein is Guanylate kinase.